We begin with the raw amino-acid sequence, 124 residues long: BLOC-1-related complex subunit 8 (124 aa).

The segment at 102–124 (SSSQGRSAVINPNETPAHTSVTP) is disordered.

This sequence belongs to the BORCS8 family.

Its subcellular location is the lysosome membrane. As part of a BORC-like complex, it may play a role in the movement and localization of lysosomes at the cell periphery. Associated with the cytosolic face of lysosomes, this complex may couple lysosomes to microtubule plus-end-directed kinesin motors, driving lysosome movement toward the cell periphery. The chain is BLOC-1-related complex subunit 8 from Danio rerio (Zebrafish).